Here is a 154-residue protein sequence, read N- to C-terminus: Large ribosomal subunit protein bL19 (154 aa).

Residues Met1 to Pro33 form a disordered region. Residues Glu16–Ala27 show a composition bias toward low complexity.

This sequence belongs to the bacterial ribosomal protein bL19 family.

Functionally, this protein is located at the 30S-50S ribosomal subunit interface and may play a role in the structure and function of the aminoacyl-tRNA binding site. The chain is Large ribosomal subunit protein bL19 from Parasynechococcus marenigrum (strain WH8102).